The primary structure comprises 223 residues: Ribose-5-phosphate isomerase A (223 aa).

Residues 26–29 (TGST), 82–85 (DGAD), and 95–98 (KGGG) contribute to the substrate site. The active-site Proton acceptor is the Glu-104. Lys-122 is a binding site for substrate.

This sequence belongs to the ribose 5-phosphate isomerase family. In terms of assembly, homodimer.

The catalysed reaction is aldehydo-D-ribose 5-phosphate = D-ribulose 5-phosphate. The protein operates within carbohydrate degradation; pentose phosphate pathway; D-ribose 5-phosphate from D-ribulose 5-phosphate (non-oxidative stage): step 1/1. In terms of biological role, catalyzes the reversible conversion of ribose-5-phosphate to ribulose 5-phosphate. In Streptococcus agalactiae serotype Ia (strain ATCC 27591 / A909 / CDC SS700), this protein is Ribose-5-phosphate isomerase A.